Reading from the N-terminus, the 351-residue chain is Probable dual-specificity RNA methyltransferase RlmN (351 aa).

Residue glutamate 102 is the Proton acceptor of the active site. The Radical SAM core domain occupies 110-339 (DGGRKTICIS…ILNRRSPGKD (230 aa)). Cysteine 117 and cysteine 344 are disulfide-bonded. [4Fe-4S] cluster-binding residues include cysteine 124, cysteine 128, and cysteine 131. Residues 171–172 (GE), serine 203, 226–228 (SLN), and asparagine 302 contribute to the S-adenosyl-L-methionine site. Cysteine 344 (S-methylcysteine intermediate) is an active-site residue.

Belongs to the radical SAM superfamily. RlmN family. [4Fe-4S] cluster serves as cofactor.

The protein resides in the cytoplasm. It carries out the reaction adenosine(2503) in 23S rRNA + 2 reduced [2Fe-2S]-[ferredoxin] + 2 S-adenosyl-L-methionine = 2-methyladenosine(2503) in 23S rRNA + 5'-deoxyadenosine + L-methionine + 2 oxidized [2Fe-2S]-[ferredoxin] + S-adenosyl-L-homocysteine. It catalyses the reaction adenosine(37) in tRNA + 2 reduced [2Fe-2S]-[ferredoxin] + 2 S-adenosyl-L-methionine = 2-methyladenosine(37) in tRNA + 5'-deoxyadenosine + L-methionine + 2 oxidized [2Fe-2S]-[ferredoxin] + S-adenosyl-L-homocysteine. Specifically methylates position 2 of adenine 2503 in 23S rRNA and position 2 of adenine 37 in tRNAs. The chain is Probable dual-specificity RNA methyltransferase RlmN from Leptospira borgpetersenii serovar Hardjo-bovis (strain JB197).